The chain runs to 201 residues: 3-isopropylmalate dehydratase small subunit (201 aa).

This sequence belongs to the LeuD family. LeuD type 1 subfamily. In terms of assembly, heterodimer of LeuC and LeuD.

It catalyses the reaction (2R,3S)-3-isopropylmalate = (2S)-2-isopropylmalate. The protein operates within amino-acid biosynthesis; L-leucine biosynthesis; L-leucine from 3-methyl-2-oxobutanoate: step 2/4. In terms of biological role, catalyzes the isomerization between 2-isopropylmalate and 3-isopropylmalate, via the formation of 2-isopropylmaleate. This Shigella dysenteriae serotype 1 (strain Sd197) protein is 3-isopropylmalate dehydratase small subunit.